Reading from the N-terminus, the 147-residue chain is CLAVATA3/ESR (CLE)-related protein 4C (147 aa).

The N-terminal stretch at 1-21 (MATNTMLCLFVISVVLALAFA) is a signal peptide. The required for secretion from the host cytoplasm to the host apoplasm stretch occupies residues 21–83 (ATNKKGDEEP…SNQLPNNNWM (63 aa)). Asn32 carries an N-linked (GlcNAc...) asparagine glycan. 2 disordered regions span residues 57–86 (GADATRGGGAVYGGNLKSNQLPNNNWMAPP) and 116–147 (RKTGMHSQRHHEETTLEQEKRVAGAGPDPIHH). The span at 125–137 (HHEETTLEQEKRV) shows a compositional bias: basic and acidic residues. A CLE motif is present at residues 136–147 (RVAGAGPDPIHH).

The protein belongs to the CLV3/ESR signal peptide family. Highly expressed exclusively within the dorsal esophageal gland cell during syncytium formation in host plants.

It localises to the secreted. Its subcellular location is the host cytoplasm. It is found in the host extracellular space. The protein resides in the extracellular space. The protein localises to the apoplast. Its function is as follows. Mimics host plant CLE extracellular signal peptides that regulate cell fate. May play a role in the differentiation or division of feeding cells (syncytia) induced in plant roots during infection. This chain is CLAVATA3/ESR (CLE)-related protein 4C (CLE-4C), found in Globodera rostochiensis (Golden nematode worm).